The primary structure comprises 1084 residues: Cellulose synthase A catalytic subunit 6 [UDP-forming] (1084 aa).

Residue methionine 1 is modified to N-acetylmethionine. Topologically, residues 1-277 are cytoplasmic; the sequence is MNTGGRLIAG…KSSKINPYRM (277 aa). The Zn(2+) site is built by cysteine 39, cysteine 42, cysteine 58, cysteine 61, cysteine 66, cysteine 69, cysteine 81, and cysteine 84. An RING-type; degenerate zinc finger spans residues 39–85; sequence CQICRDEIELTVDGEPFVACNECAFPVCRPCYEYERREGNQACPQCK. A helical membrane pass occupies residues 278-298; that stretch reads LIVLRLVILGLFFHYRILHPV. The Extracellular portion of the chain corresponds to 299–300; sequence KD. The chain crosses the membrane as a helical span at residues 301 to 321; it reads AYALWLISVICEIWFAVSWVL. The Cytoplasmic portion of the chain corresponds to 322 to 868; the sequence is DQFPKWYPIE…INSVVYPWTS (547 aa). UDP-alpha-D-glucose is bound by residues serine 360, lysine 366, glutamate 367, and aspartate 396. The active site involves aspartate 396. Residues 450-476 adopt a coiled-coil conformation; it reads VRERRAMKRDYEEFKVKINALVATAQK. Lysine 537 is a binding site for UDP-alpha-D-glucose. Positions 538 and 562 each coordinate Mn(2+). Residues 675-703 adopt a coiled-coil conformation; the sequence is RKAKTVAADKKKKNREASKQIHALENIEE. Residue aspartate 785 is part of the active site. The helical transmembrane segment at 869–889 threads the bilayer; that stretch reads LPLIVYCSLPAICLLTGKFIV. The Extracellular portion of the chain corresponds to 890 to 894; that stretch reads PEISN. A helical membrane pass occupies residues 895–915; the sequence is YASILFMALFSSIAITGILEM. Residues 916 to 930 are Cytoplasmic-facing; it reads QWGKVGIDDWWRNEQ. The helical transmembrane segment at 931-951 threads the bilayer; it reads FWVIGGVSAHLFALFQGLLKV. At 952 to 980 the chain is on the extracellular side; it reads LAGVDTNFTVTSKAADDGEFSDLYLFKWT. Asparagine 958 carries an N-linked (GlcNAc...) asparagine glycan. A helical membrane pass occupies residues 981-1001; the sequence is SLLIPPMTLLIINVIGVIVGV. Residues 1002–1012 are Cytoplasmic-facing; it reads SDAISNGYDSW. Residues 1013–1033 traverse the membrane as a helical segment; that stretch reads GPLFGRLFFALWVIIHLYPFL. Over 1034–1042 the chain is Extracellular; it reads KGLLGKQDR. Residues 1043-1063 traverse the membrane as a helical segment; that stretch reads MPTIIVVWSILLASILTLLWV. At 1064-1084 the chain is on the cytoplasmic side; the sequence is RVNPFVAKGGPILEICGLDCL.

The protein belongs to the glycosyltransferase 2 family. Plant cellulose synthase subfamily. Interacts with CESA1 and CESA3. Interacts with STL1 and STL2, but not with GOT1. Binds to CSI1 and CSI3. Interacts with PAT24/TIP1. It depends on Zn(2+) as a cofactor. Mn(2+) is required as a cofactor. Post-translationally, S-acylated. Expressed in germinating seeds, seedlings, roots, stems, leaves and flowers. Not present in mature flowers.

The protein localises to the cell membrane. The enzyme catalyses [(1-&gt;4)-beta-D-glucosyl](n) + UDP-alpha-D-glucose = [(1-&gt;4)-beta-D-glucosyl](n+1) + UDP + H(+). The protein operates within glycan metabolism; plant cellulose biosynthesis. In terms of biological role, catalytic subunit of cellulose synthase terminal complexes ('rosettes'), required for beta-1,4-glucan microfibril crystallization, a major mechanism of the cell wall formation. Involved in the primary cell wall formation. The presence of each protein CESA1 and CESA6 is critical for cell expansion. The hypocotyl elongation is based on a CESA6-dependent cell elongation in dark and a CESA6-independent cell elongation in light. The transition between these two mechanisms requires photosynthesis and PHYB, but not CRY1. The CESA6-dependent cell elongation seems to be independent of gibberellic acid, auxin and ethylene. May be involved in sensitivity to isoxaben. Associates with and moves along cortical microtubules for the process of cellulose deposition. The chain is Cellulose synthase A catalytic subunit 6 [UDP-forming] from Arabidopsis thaliana (Mouse-ear cress).